The following is a 93-amino-acid chain: Small ribosomal subunit protein uS15 (93 aa).

Belongs to the universal ribosomal protein uS15 family. In terms of assembly, part of the 30S ribosomal subunit. Forms a bridge to the 50S subunit in the 70S ribosome, contacting the 23S rRNA.

Its function is as follows. One of the primary rRNA binding proteins, it binds directly to 16S rRNA where it helps nucleate assembly of the platform of the 30S subunit by binding and bridging several RNA helices of the 16S rRNA. Functionally, forms an intersubunit bridge (bridge B4) with the 23S rRNA of the 50S subunit in the ribosome. This chain is Small ribosomal subunit protein uS15, found in Ehrlichia chaffeensis (strain ATCC CRL-10679 / Arkansas).